Reading from the N-terminus, the 172-residue chain is 3-hydroxydecanoyl-[acyl-carrier-protein] dehydratase (172 aa).

His-71 is a catalytic residue.

This sequence belongs to the thioester dehydratase family. FabA subfamily. In terms of assembly, homodimer.

It is found in the cytoplasm. The enzyme catalyses a (3R)-hydroxyacyl-[ACP] = a (2E)-enoyl-[ACP] + H2O. The catalysed reaction is (3R)-hydroxydecanoyl-[ACP] = (2E)-decenoyl-[ACP] + H2O. It carries out the reaction (2E)-decenoyl-[ACP] = (3Z)-decenoyl-[ACP]. It functions in the pathway lipid metabolism; fatty acid biosynthesis. Necessary for the introduction of cis unsaturation into fatty acids. Catalyzes the dehydration of (3R)-3-hydroxydecanoyl-ACP to E-(2)-decenoyl-ACP and then its isomerization to Z-(3)-decenoyl-ACP. Can catalyze the dehydratase reaction for beta-hydroxyacyl-ACPs with saturated chain lengths up to 16:0, being most active on intermediate chain length. The chain is 3-hydroxydecanoyl-[acyl-carrier-protein] dehydratase from Salmonella arizonae (strain ATCC BAA-731 / CDC346-86 / RSK2980).